A 1084-amino-acid chain; its full sequence is Cellulose synthase A catalytic subunit 2 [UDP-forming] (1084 aa).

Position 1 is an N-acetylmethionine (methionine 1). Residues 1–278 lie on the Cytoplasmic side of the membrane; that stretch reads MNTGGRLIAG…RSSRINPYRM (278 aa). Zn(2+) contacts are provided by cysteine 39, cysteine 42, cysteine 58, cysteine 61, cysteine 66, cysteine 69, cysteine 81, and cysteine 84. Residues 39–85 form an RING-type; degenerate zinc finger; sequence CQICGDEIELTVSSELFVACNECAFPVCRPCYEYERREGNQACPQCK. The segment at 230 to 259 is disordered; it reads IKHEGGNNGRGSNDDDELDDPDMPMMDEGR. The helical transmembrane segment at 279–299 threads the bilayer; the sequence is LILCRLAILGLFFHYRILHPV. Topologically, residues 300 to 301 are extracellular; it reads ND. The chain crosses the membrane as a helical span at residues 302–322; it reads AYGLWLTSVICEIWFAVSWIL. Topologically, residues 323–867 are cytoplasmic; sequence DQFPKWYPIE…INSVVYPWTS (545 aa). UDP-alpha-D-glucose contacts are provided by serine 361, lysine 367, glutamate 368, and aspartate 397. Aspartate 397 is an active-site residue. Positions 451–477 form a coiled coil; sequence VRERRAMKRDYEEFKVKINALVATAQK. Position 538 (lysine 538) interacts with UDP-alpha-D-glucose. Mn(2+)-binding residues include lysine 539 and aspartate 563. Aspartate 784 is a catalytic residue. Residues 868–888 form a helical membrane-spanning segment; it reads LPLIVYCSLPAVCLLTGKFIV. Topologically, residues 889 to 893 are extracellular; sequence PEISN. Residues 894-914 form a helical membrane-spanning segment; it reads YAGILFMLMFISIAVTGILEM. The Cytoplasmic portion of the chain corresponds to 915 to 929; that stretch reads QWGGVGIDDWWRNEQ. A helical transmembrane segment spans residues 930 to 950; the sequence is FWVIGGASSHLFALFQGLLKV. Over 951 to 979 the chain is Extracellular; the sequence is LAGVNTNFTVTSKAADDGAFSELYIFKWT. N-linked (GlcNAc...) asparagine glycosylation occurs at asparagine 957. The chain crosses the membrane as a helical span at residues 980–1000; sequence TLLIPPTTLLIINIIGVIVGV. Residues 1001 to 1011 lie on the Cytoplasmic side of the membrane; it reads SDAISNGYDSW. The chain crosses the membrane as a helical span at residues 1012–1032; it reads GPLFGRLFFALWVIVHLYPFL. The Extracellular segment spans residues 1033–1041; sequence KGMLGKQDK. A helical transmembrane segment spans residues 1042–1062; the sequence is MPTIIVVWSILLASILTLLWV. At 1063 to 1084 the chain is on the cytoplasmic side; that stretch reads RVNPFVAKGGPVLEICGLNCGN.

The protein belongs to the glycosyltransferase 2 family. Plant cellulose synthase subfamily. Homodimer. Interaction through zinc finger domain. It depends on Mn(2+) as a cofactor. Zn(2+) serves as cofactor. Strongly and ubiquitously expressed. Localized in some dividing and expanding cells, as well as in vascular tissues.

It is found in the cell membrane. It catalyses the reaction [(1-&gt;4)-beta-D-glucosyl](n) + UDP-alpha-D-glucose = [(1-&gt;4)-beta-D-glucosyl](n+1) + UDP + H(+). Its pathway is glycan metabolism; plant cellulose biosynthesis. Catalytic subunit of cellulose synthase terminal complexes ('rosettes'), required for beta-1,4-glucan microfibril crystallization, a major mechanism of the cell wall formation. Involved in the primary cell wall formation. The chain is Cellulose synthase A catalytic subunit 2 [UDP-forming] from Arabidopsis thaliana (Mouse-ear cress).